The chain runs to 326 residues: Transmembrane protein PVRIG (326 aa).

A run of 3 helical transmembrane segments spans residues 26-46 (LVLP…EVWV), 62-78 (CGFL…VSWG), and 172-192 (LAGI…LLHL). At Tyr-233 the chain carries Phosphotyrosine. Residues 296 to 326 (AGERPPHTGPGLTLFPDPRGPRAMEGPLGVR) form a disordered region.

As to quaternary structure, interacts with NECTIN2, hence competing with CD226. In terms of tissue distribution, expressed in some types of immune cells. Expressed at low levels on the surface of freshly isolated T-cells and natural killer (NK) cells, predominantly on CD8+ T-cells (mainly memory/effector, but not naive cells) and on both CD16+ and CD16- NK cells. T-cell expression levels are variable among individuals. Not detected in B-cells, naive or helper T-cells, monocytes, nor neutrophils (at protein level). Not detected in dendritic cells.

The protein resides in the cell membrane. In terms of biological role, cell surface receptor for NECTIN2. May act as a coinhibitory receptor that suppresses T-cell receptor-mediated signals. Following interaction with NECTIN2, inhibits T-cell proliferation. Competes with CD226 for NECTIN2-binding. The sequence is that of Transmembrane protein PVRIG (PVRIG) from Homo sapiens (Human).